Here is a 245-residue protein sequence, read N- to C-terminus: Adapter protein MecA (245 aa).

The protein belongs to the MecA family. Homodimer.

Its function is as follows. Enables the recognition and targeting of unfolded and aggregated proteins to the ClpC protease or to other proteins involved in proteolysis. In Streptococcus pneumoniae serotype 4 (strain ATCC BAA-334 / TIGR4), this protein is Adapter protein MecA.